The following is a 32-amino-acid chain: MEALVYTFLLVATLGIIFFAIFFRDPPKVPNK.

A helical transmembrane segment spans residues 3-23; the sequence is ALVYTFLLVATLGIIFFAIFF.

It belongs to the PsbT family. PSII is composed of 1 copy each of membrane proteins PsbA, PsbB, PsbC, PsbD, PsbE, PsbF, PsbH, PsbI, PsbJ, PsbK, PsbL, PsbM, PsbT, PsbY, PsbZ, Psb30/Ycf12, at least 3 peripheral proteins of the oxygen-evolving complex and a large number of cofactors. It forms dimeric complexes.

Its subcellular location is the plastid. It is found in the chloroplast thylakoid membrane. In terms of biological role, found at the monomer-monomer interface of the photosystem II (PS II) dimer, plays a role in assembly and dimerization of PSII. PSII is a light-driven water plastoquinone oxidoreductase, using light energy to abstract electrons from H(2)O, generating a proton gradient subsequently used for ATP formation. In Psilotum nudum (Whisk fern), this protein is Photosystem II reaction center protein T.